We begin with the raw amino-acid sequence, 317 residues long: Probable RuBisCO transcriptional regulator (317 aa).

Residues phenylalanine 6–threonine 63 enclose the HTH lysR-type domain. The H-T-H motif DNA-binding region spans phenylalanine 23–histidine 42.

It belongs to the LysR transcriptional regulatory family.

The protein localises to the plastid. The protein resides in the chloroplast. Its function is as follows. Trans-acting transcriptional regulator of RuBisCO genes (rbcL and rbcS) expression. The protein is Probable RuBisCO transcriptional regulator (rbcR) of Cyanidium caldarium (Red alga).